The chain runs to 205 residues: Small ribosomal subunit protein uS4 (205 aa).

Over residues 1–12 the composition is skewed to basic residues; that stretch reads MSKRVQAKHKLD. The interval 1 to 49 is disordered; that stretch reads MSKRVQAKHKLDRRMGQNIWGRPKSPVNRREYGPGQHGQRRKGKMSDFG. In terms of domain architecture, S4 RNA-binding spans 94–155; it reads RRLDAVVYRS…ASRQLEIVVV (62 aa).

This sequence belongs to the universal ribosomal protein uS4 family. As to quaternary structure, part of the 30S ribosomal subunit. Contacts protein S5. The interaction surface between S4 and S5 is involved in control of translational fidelity.

In terms of biological role, one of the primary rRNA binding proteins, it binds directly to 16S rRNA where it nucleates assembly of the body of the 30S subunit. Functionally, with S5 and S12 plays an important role in translational accuracy. The polypeptide is Small ribosomal subunit protein uS4 (Methylorubrum extorquens (strain CM4 / NCIMB 13688) (Methylobacterium extorquens)).